A 631-amino-acid chain; its full sequence is tRNA uridine 5-carboxymethylaminomethyl modification enzyme MnmG (631 aa).

15-20 (GAGHAG) provides a ligand contact to FAD. Positions 203-232 (TPPRVDGNTVDYSKTQEEPGDKEPRHFSYT) are disordered. Over residues 216-232 (KTQEEPGDKEPRHFSYT) the composition is skewed to basic and acidic residues. 276–290 (GPRYCPSIEDKVVRF) contributes to the NAD(+) binding site.

This sequence belongs to the MnmG family. Homodimer. Heterotetramer of two MnmE and two MnmG subunits. It depends on FAD as a cofactor.

It is found in the cytoplasm. Its function is as follows. NAD-binding protein involved in the addition of a carboxymethylaminomethyl (cmnm) group at the wobble position (U34) of certain tRNAs, forming tRNA-cmnm(5)s(2)U34. This is tRNA uridine 5-carboxymethylaminomethyl modification enzyme MnmG from Lactobacillus gasseri (strain ATCC 33323 / DSM 20243 / BCRC 14619 / CIP 102991 / JCM 1131 / KCTC 3163 / NCIMB 11718 / NCTC 13722 / AM63).